We begin with the raw amino-acid sequence, 498 residues long: Glycerol kinase (498 aa).

Threonine 12 lines the ADP pocket. ATP contacts are provided by threonine 12, threonine 13, and serine 14. Threonine 12 lines the sn-glycerol 3-phosphate pocket. Position 16 (arginine 16) interacts with ADP. Positions 82, 134, and 243 each coordinate sn-glycerol 3-phosphate. Arginine 82, tyrosine 134, aspartate 243, and glutamine 244 together coordinate glycerol. 2 residues coordinate ADP: threonine 265 and glycine 308. ATP is bound by residues threonine 265, glycine 308, glutamine 312, and glycine 411. Residue glycine 411 coordinates ADP.

It belongs to the FGGY kinase family.

It carries out the reaction glycerol + ATP = sn-glycerol 3-phosphate + ADP + H(+). It participates in polyol metabolism; glycerol degradation via glycerol kinase pathway; sn-glycerol 3-phosphate from glycerol: step 1/1. With respect to regulation, inhibited by fructose 1,6-bisphosphate (FBP). In terms of biological role, key enzyme in the regulation of glycerol uptake and metabolism. Catalyzes the phosphorylation of glycerol to yield sn-glycerol 3-phosphate. This is Glycerol kinase from Brucella suis (strain ATCC 23445 / NCTC 10510).